The sequence spans 932 residues: Probable serine/threonine-protein kinase clkA (932 aa).

A compositionally biased stretch (basic residues) spans 1–10; the sequence is MDRFQTKRKT. Disordered stretches follow at residues 1-21, 39-198, and 212-562; these read MDRF…NNDY, YKNN…YGDT, and NDYD…TNTN. Low complexity-rich tracts occupy residues 11–21 and 39–123; these read YSYNGYSNNDY and YKNN…ENNY. Residues 124-143 are compositionally biased toward polar residues; it reads FQSENQSNKDQNSYFNSSYL. Low complexity-rich tracts occupy residues 148 to 196, 218 to 305, 314 to 342, and 351 to 562; these read DNYN…NSYG, NNNN…NGGN, VFNN…NNDY, and NIYS…TNTN. The 331-residue stretch at 590–920 folds into the Protein kinase domain; that stretch reads YKVLCTVGSG…ASDALSHPFL (331 aa). Residues 596 to 604 and Lys619 each bind ATP; that span reads VGSGTFSTV. The active-site Proton acceptor is the Asp719.

It belongs to the protein kinase superfamily. CMGC Ser/Thr protein kinase family.

The catalysed reaction is L-seryl-[protein] + ATP = O-phospho-L-seryl-[protein] + ADP + H(+). It carries out the reaction L-threonyl-[protein] + ATP = O-phospho-L-threonyl-[protein] + ADP + H(+). The sequence is that of Probable serine/threonine-protein kinase clkA (clkA) from Dictyostelium discoideum (Social amoeba).